Reading from the N-terminus, the 627-residue chain is BURP domain-containing protein 12 (627 aa).

Positions 1-25 (MASPPHLPLLLLLLVVVCNAAGGDG) are cleaved as a signal peptide. N-linked (GlcNAc...) asparagine glycosylation is found at N119, N175, N251, N366, N384, and N530. A BURP domain is found at 415–626 (FFRETELVSG…FEGDMTWTVA (212 aa)).

Expressed in stems, leaves, shoot and panicles.

This Oryza sativa subsp. japonica (Rice) protein is BURP domain-containing protein 12 (BURP12).